The following is a 188-amino-acid chain: MADLARLTALIEPEAKALGFELVRVKMMPSEAGDGGQALQIMAEDPATGQLLIEQCAELSRKVSDVIDAAEESGEVLIEGAYHLEVSSPGIDRPLTRPKDFADWAGHEAKVSLVEKIDGHRNMRGILLGIDGETVTIADNRAGEVSFALEQIHSAKLVLTDKLIAATQPLDADGAEEVLEDKEEKADD.

This sequence belongs to the RimP family.

The protein resides in the cytoplasm. In terms of biological role, required for maturation of 30S ribosomal subunits. The protein is Ribosome maturation factor RimP of Erythrobacter litoralis (strain HTCC2594).